The primary structure comprises 261 residues: Insulin-like growth factor-binding protein-related protein 1 (261 aa).

An N-terminal signal peptide occupies residues methionine 1–cysteine 17. An IGFBP N-terminal domain is found at glutamate 18 to leucine 101. Disulfide bonds link cysteine 21-cysteine 45, cysteine 24-cysteine 47, cysteine 29-cysteine 48, cysteine 36-cysteine 51, cysteine 59-cysteine 82, cysteine 76-cysteine 98, cysteine 100-cysteine 118, and cysteine 107-cysteine 139. In terms of domain architecture, Kazal-like spans asparagine 70 to serine 141. The 101-residue stretch at proline 143–valine 243 folds into the Ig-like C2-type domain. The N-linked (GlcNAc...) asparagine glycan is linked to asparagine 154. Cysteine 164 and cysteine 227 form a disulfide bridge.

In terms of tissue distribution, expressed by the venom gland.

It is found in the secreted. The sequence is that of Insulin-like growth factor-binding protein-related protein 1 from Cupiennius salei (American wandering spider).